The following is a 92-amino-acid chain: Transcription factor PRE5 (92 aa).

One can recognise a bHLH domain in the interval 4–59 (RRSRQTSNASRISDDQMIDLVSKLRQFLPEIHERRRSDKVSASKVLQETCNYIRKL).

Belongs to the bHLH protein family. Interacts with IBH1.

It localises to the nucleus. Its function is as follows. Atypical and probable non DNA-binding bHLH transcription factor that integrates multiple signaling pathways to regulate cell elongation and plant development. May have a regulatory role in various aspects of gibberellin-dependent growth and development. The polypeptide is Transcription factor PRE5 (PRE5) (Arabidopsis thaliana (Mouse-ear cress)).